The sequence spans 1755 residues: Transposon Ty1-LR2 Gag-Pol polyprotein (1755 aa).

Composition is skewed to polar residues over residues 1-23, 48-60, and 127-152; these read MESQQLSQHSPISHGSACASVTS, TKANSQQTTTPAS, and QSQFPQYPSSVGTPLSTPSPESGNTF. Disordered regions lie at residues 1 to 93, 126 to 174, and 352 to 421; these read MESQ…MMTQ, PQSQ…PPPM, and GSRN…SKST. Residues 153 to 165 show a composition bias toward low complexity; that stretch reads TDSSSADSDMTST. The segment at 299–401 is RNA-binding; the sequence is NNGIHINNKV…NSKSKTARAH (103 aa). The span at 402–418 shows a compositional bias: low complexity; the sequence is NVSTSNNSPSTDNDSIS. Ser416 is modified (phosphoserine). Asp461 acts as the For protease activity; shared with dimeric partner in catalysis. Residues 583–640 are integrase-type zinc finger-like; sequence NVHTSESTRKYPYPFIHRMLAHANAPTIRYSLKNNTITYFNESDVDWSSAIDYQCPDC. Residues 660 to 835 enclose the Integrase catalytic domain; the sequence is NSYEPFQYLH…AGLDISTLLP (176 aa). Positions 671 and 736 each coordinate Mg(2+). 3 disordered regions span residues 956–1087, 1092–1111, and 1130–1187; these read SKAV…ETEK, RSPSIDASPPENNSSHNIVP, and DLPL…DNET. Over residues 960–969 the composition is skewed to low complexity; sequence SPTDSTPPST. The segment covering 1005 to 1015 has biased composition (polar residues); sequence STPQISNIEST. Residues 1038 to 1053 show a composition bias toward basic and acidic residues; sequence ESSHASKSKDFRHSDS. Composition is skewed to polar residues over residues 1054–1082 and 1101–1111; these read YSENETNHTNVPISSTGGTNNKTVPQISD and PENNSSHNIVP. The Bipartite nuclear localization signal motif lies at 1178 to 1212; sequence KKRSLEDNETEIKVSRDTWNTKNMRSLEPPRSKKR. In terms of domain architecture, Reverse transcriptase Ty1/copia-type spans 1338-1476; the sequence is NNYYITQLDI…DILGLEIKYQ (139 aa). Mg(2+)-binding residues include Asp1346, Asp1427, Asp1428, Asp1610, Glu1652, and Asp1685. An RNase H Ty1/copia-type domain is found at 1610-1752; sequence DASYGNQPYY…IKTFKLLTNK (143 aa).

In terms of assembly, the capsid protein forms a homotrimer, from which the VLPs are assembled. The protease is a homodimer, whose active site consists of two apposed aspartic acid residues. In terms of processing, initially, virus-like particles (VLPs) are composed of the structural unprocessed proteins Gag and Gag-Pol, and also contain the host initiator methionine tRNA (tRNA(i)-Met) which serves as a primer for minus-strand DNA synthesis, and a dimer of genomic Ty RNA. Processing of the polyproteins occurs within the particle and proceeds by an ordered pathway, called maturation. First, the protease (PR) is released by autocatalytic cleavage of the Gag-Pol polyprotein yielding capsid protein p45 and a Pol-p154 precursor protein. This cleavage is a prerequisite for subsequent processing of Pol-p154 at the remaining sites to release the mature structural and catalytic proteins. Maturation takes place prior to the RT reaction and is required to produce transposition-competent VLPs.

Its subcellular location is the cytoplasm. It localises to the nucleus. The catalysed reaction is DNA(n) + a 2'-deoxyribonucleoside 5'-triphosphate = DNA(n+1) + diphosphate. It carries out the reaction Endonucleolytic cleavage to 5'-phosphomonoester.. Capsid protein (CA) is the structural component of the virus-like particle (VLP), forming the shell that encapsulates the retrotransposons dimeric RNA genome. The particles are assembled from trimer-clustered units and there are holes in the capsid shells that allow for the diffusion of macromolecules. CA also has nucleocapsid-like chaperone activity, promoting primer tRNA(i)-Met annealing to the multipartite primer-binding site (PBS), dimerization of Ty1 RNA and initiation of reverse transcription. In terms of biological role, the aspartyl protease (PR) mediates the proteolytic cleavages of the Gag and Gag-Pol polyproteins after assembly of the VLP. Its function is as follows. Reverse transcriptase/ribonuclease H (RT) is a multifunctional enzyme that catalyzes the conversion of the retro-elements RNA genome into dsDNA within the VLP. The enzyme displays a DNA polymerase activity that can copy either DNA or RNA templates, and a ribonuclease H (RNase H) activity that cleaves the RNA strand of RNA-DNA heteroduplexes during plus-strand synthesis and hydrolyzes RNA primers. The conversion leads to a linear dsDNA copy of the retrotransposon that includes long terminal repeats (LTRs) at both ends. Functionally, integrase (IN) targets the VLP to the nucleus, where a subparticle preintegration complex (PIC) containing at least integrase and the newly synthesized dsDNA copy of the retrotransposon must transit the nuclear membrane. Once in the nucleus, integrase performs the integration of the dsDNA into the host genome. The polypeptide is Transposon Ty1-LR2 Gag-Pol polyprotein (TY1B-LR2) (Saccharomyces cerevisiae (strain ATCC 204508 / S288c) (Baker's yeast)).